We begin with the raw amino-acid sequence, 426 residues long: COP9 signalosome complex subunit 6 (426 aa).

One can recognise an MPN domain in the interval V14–F155. The tract at residues P320–S426 is disordered. Acidic residues predominate over residues A334 to N347.

Belongs to the peptidase M67A family. CSN6 subfamily. Component of the CSN complex, probably composed of csn-1, csn-2, csn-3, csn-4, csn-5, csn-6 and csn-7. Within the complex it probably interacts directly with csn-2 and csn-4. Interacts with rbx-1.

The protein resides in the cytoplasm. It is found in the nucleus. Functionally, component of the COP9 signalosome complex (CSN), a complex involved in various cellular and developmental processes. The CSN complex is an essential regulator of the ubiquitin (Ubl) conjugation pathway by mediating the deneddylation of the cullin subunits of the SCF-type E3 ligase complexes, leading to decrease the Ubl ligase activity of SCF. The CSN complex plays an essential role in embryogenesis and oogenesis and is required to regulate microtubule stability in the early embryo. Mediates mei-3/katanin targeting for degradation at the meiosis to mitosis transition via deneddylation of cul-3. This chain is COP9 signalosome complex subunit 6 (csn-6), found in Caenorhabditis elegans.